The chain runs to 483 residues: Zinc metalloproteinase/disintegrin VMP-II (483 aa).

An N-terminal signal peptide occupies residues 1–20; that stretch reads MIQVLLVTLCLAAFPYQGNS. Positions 21–191 are excised as a propeptide; that stretch reads IILESGNVND…KASQLNLTPE (171 aa). Positions 198–394 constitute a Peptidase M12B domain; the sequence is RYIELVVVAD…HNPQCMLNEP (197 aa). Residues Glu-201 and Asp-285 each coordinate Ca(2+). Disulfide bonds link Cys-309–Cys-389, Cys-349–Cys-373, and Cys-351–Cys-356. Residue His-334 coordinates Zn(2+). Glu-335 is an active-site residue. Positions 338 and 344 each coordinate Zn(2+). The Ca(2+) site is built by Cys-389 and Asn-392. Positions 395 to 414 are excised as a propeptide; the sequence is LRTDIVSTPVSGNELWETGE. Residues 402-483 enclose the Disintegrin domain; sequence TPVSGNELWE…AGCPRNPFHA (82 aa). Intrachain disulfides connect Cys-425-Cys-448, Cys-439-Cys-445, Cys-444-Cys-469, and Cys-457-Cys-476. Residues 461-463 carry the Cell attachment site; atypical (KGD) motif; the sequence is KGD.

The protein belongs to the venom metalloproteinase (M12B) family. P-II subfamily. P-IIe sub-subfamily. As to quaternary structure, heterodimer; disulfide-linked (disintegrin). It depends on Zn(2+) as a cofactor. Expressed by the venom gland.

It is found in the secreted. With respect to regulation, inhibited by EDTA and 1,10-phenanthroline, but not by PMSF. Functionally, has fibrinolytic activity. The recombinant enzyme cleaves both alpha- (FGA) and beta-chains (FGB) of fibrinogen, but not the gamma-chain. The recombinant protein does not produce hemorrhage in mice and does not have effect on ADP- or collagen-stimulated platelet aggregation. Its function is as follows. Inhibits platelet aggregation induced by ADP, thrombin, platelet-activating factor and collagen. Acts by inhibiting fibrinogen interaction with platelet receptors GPIIb/GPIIIa (ITGA2B/ITGB3). The sequence is that of Zinc metalloproteinase/disintegrin VMP-II from Agkistrodon piscivorus leucostoma (Western cottonmouth).